The following is a 364-amino-acid chain: Aminomethyltransferase (364 aa).

The protein belongs to the GcvT family. As to quaternary structure, the glycine cleavage system is composed of four proteins: P, T, L and H.

The enzyme catalyses N(6)-[(R)-S(8)-aminomethyldihydrolipoyl]-L-lysyl-[protein] + (6S)-5,6,7,8-tetrahydrofolate = N(6)-[(R)-dihydrolipoyl]-L-lysyl-[protein] + (6R)-5,10-methylene-5,6,7,8-tetrahydrofolate + NH4(+). In terms of biological role, the glycine cleavage system catalyzes the degradation of glycine. In Proteus mirabilis (strain HI4320), this protein is Aminomethyltransferase.